A 210-amino-acid polypeptide reads, in one-letter code: Phosphate propanoyltransferase (210 aa).

26–28 is a CoA binding site; the sequence is ISN. Residues histidine 30 and histidine 32 each contribute to the Zn(2+) site. Residues lysine 71 and arginine 78 each coordinate CoA. Residue arginine 84 coordinates phosphate. Zn(2+) contacts are provided by glutamate 90, histidine 138, histidine 140, and histidine 186. Asparagine 193 is a binding site for CoA.

Belongs to the PduL family. Requires Zn(2+) as cofactor.

The protein resides in the bacterial microcompartment. The enzyme catalyses propanoyl-CoA + phosphate = propanoyl phosphate + CoA. It functions in the pathway polyol metabolism; 1,2-propanediol degradation. Functionally, involved in 1,2-propanediol (1,2-PD) utilization within the bacterial microcompartment (BMC) dedicated to 1,2-PD degradation by catalyzing the conversion of propanoyl-CoA to propanoyl-phosphate. Required for optimal growth on 1,2-PD. CoA is regenerated within the BMC (for use by PduP) via this enzyme, although there must also be cofactor transport across the BMC. Directly targeted to the BMC. Expression of a cosmid containing the full 21-gene pdu operon in E.coli allows E.coli to grow on 1,2-propanediol (1,2-PD) with the appearance of bacterial microcompartments (BMC) in its cytoplasm. In terms of biological role, the 1,2-PD-specific bacterial microcompartment (BMC) concentrates low levels of 1,2-PD catabolic enzymes, concentrates volatile reaction intermediates thus enhancing pathway flux and keeps the level of toxic, mutagenic propionaldehyde low. The polypeptide is Phosphate propanoyltransferase (Citrobacter freundii).